We begin with the raw amino-acid sequence, 92 residues long: uncharacterized protein (92 aa).

Positions 1 to 92 are disordered; that stretch reads MSDAAAPAQA…PSPSQQQVAA (92 aa).

This is an uncharacterized protein from Caenorhabditis elegans.